A 306-amino-acid chain; its full sequence is UDP-3-O-acyl-N-acetylglucosamine deacetylase (306 aa).

Residues H79, H238, and D242 each coordinate Zn(2+). The Proton donor role is filled by H265.

This sequence belongs to the LpxC family. It depends on Zn(2+) as a cofactor.

It catalyses the reaction a UDP-3-O-[(3R)-3-hydroxyacyl]-N-acetyl-alpha-D-glucosamine + H2O = a UDP-3-O-[(3R)-3-hydroxyacyl]-alpha-D-glucosamine + acetate. It functions in the pathway glycolipid biosynthesis; lipid IV(A) biosynthesis; lipid IV(A) from (3R)-3-hydroxytetradecanoyl-[acyl-carrier-protein] and UDP-N-acetyl-alpha-D-glucosamine: step 2/6. Functionally, catalyzes the hydrolysis of UDP-3-O-myristoyl-N-acetylglucosamine to form UDP-3-O-myristoylglucosamine and acetate, the committed step in lipid A biosynthesis. This Shewanella halifaxensis (strain HAW-EB4) protein is UDP-3-O-acyl-N-acetylglucosamine deacetylase.